Consider the following 111-residue polypeptide: UPF0122 protein LACR_1522 (111 aa).

Belongs to the UPF0122 family.

In terms of biological role, might take part in the signal recognition particle (SRP) pathway. This is inferred from the conservation of its genetic proximity to ftsY/ffh. May be a regulatory protein. The sequence is that of UPF0122 protein LACR_1522 from Lactococcus lactis subsp. cremoris (strain SK11).